The sequence spans 347 residues: NADH-ubiquinone oxidoreductase chain 2 (347 aa).

Transmembrane regions (helical) follow at residues 3–23 (PLILLLITLTVILGTLIVMMS), 25–45 (HWLMIWMGFEMNMLAVIPLLM), 59–79 (YFLTQATASMLLMLAIIINLM), 96–116 (IIMTLALMMKLGLAPFHFWVP), 122–142 (ISLTSGLILLTWQKLAPLSIL), 148–168 (VINPDLLLMASMLSIAIGGWG), 178–198 (ILAYSSIAHMGWMMSVLAFNP), 202–222 (LLNLFMYILMTSTTFMLFMVA), 240–260 (ITTSILIMMLSLGGLPPLAGF), 276–296 (IILATLMAITALLNLFFYIRL), and 326–346 (LPPLIIMSTLTLPLAPAMILL).

It belongs to the complex I subunit 2 family. In terms of assembly, core subunit of respiratory chain NADH dehydrogenase (Complex I) which is composed of 45 different subunits. Interacts with TMEM242.

The protein localises to the mitochondrion inner membrane. It catalyses the reaction a ubiquinone + NADH + 5 H(+)(in) = a ubiquinol + NAD(+) + 4 H(+)(out). Functionally, core subunit of the mitochondrial membrane respiratory chain NADH dehydrogenase (Complex I) which catalyzes electron transfer from NADH through the respiratory chain, using ubiquinone as an electron acceptor. Essential for the catalytic activity and assembly of complex I. This is NADH-ubiquinone oxidoreductase chain 2 from Peropteryx kappleri (Greater dog-like bat).